The primary structure comprises 169 residues: General odorant-binding protein 57a (169 aa).

An N-terminal signal peptide occupies residues 1-20 (MFNTRLAIFLLLIVVSLSQA). 3 disulfides stabilise this stretch: Cys-39–Cys-77, Cys-73–Cys-120, and Cys-111–Cys-129.

The protein belongs to the PBP/GOBP family.

In terms of biological role, present in the aqueous fluid surrounding olfactory sensory dendrites and are thought to aid in the capture and transport of hydrophobic odorants into and through this fluid. This chain is General odorant-binding protein 57a, found in Drosophila melanogaster (Fruit fly).